Consider the following 337-residue polypeptide: HTH-type transcriptional regulator DegA (337 aa).

The HTH lacI-type domain maps to 1-57 (MKTTIYDVAKAAGVSITTVSRVINNTGRISDKTRQKVMNVMNEMAYTPNVHAAALTG). Positions 5-24 (IYDVAKAAGVSITTVSRVIN) form a DNA-binding region, H-T-H motif. The disordered stretch occupies residues 300–319 (AERHRTAGRSNRGKRKAKQK).

Involved in the control of degradation of B.subtilis amidophosphoribosyltransferase (purF). Probably activates the gene for a degradative protease. This chain is HTH-type transcriptional regulator DegA (degA), found in Bacillus subtilis (strain 168).